The sequence spans 503 residues: ATP synthase subunit alpha (503 aa).

An ATP-binding site is contributed by 171-178; the sequence is DRQTGKTA.

It belongs to the ATPase alpha/beta chains family. F-type ATPases have 2 components, CF(1) - the catalytic core - and CF(0) - the membrane proton channel. CF(1) has five subunits: alpha(3), beta(3), gamma(1), delta(1), epsilon(1). CF(0) has four main subunits: a(1), b(1), b'(1) and c(9-12).

The protein resides in the cellular thylakoid membrane. It carries out the reaction ATP + H2O + 4 H(+)(in) = ADP + phosphate + 5 H(+)(out). In terms of biological role, produces ATP from ADP in the presence of a proton gradient across the membrane. The alpha chain is a regulatory subunit. This Synechococcus sp. (strain PCC 6716) protein is ATP synthase subunit alpha.